A 370-amino-acid chain; its full sequence is Pyrimidine monooxygenase RutA (370 aa).

FMN-binding positions include 49-50, Asn-115, Glu-124, 140-141, and Ser-190; these read IK and RY.

It belongs to the NtaA/SnaA/DszA monooxygenase family. RutA subfamily.

The enzyme catalyses uracil + FMNH2 + NADH + O2 = (Z)-3-ureidoacrylate + FMN + NAD(+) + H2O + H(+). The catalysed reaction is thymine + FMNH2 + NADH + O2 = (Z)-2-methylureidoacrylate + FMN + NAD(+) + H2O + H(+). Its function is as follows. Catalyzes the pyrimidine ring opening between N-3 and C-4 by an unusual flavin hydroperoxide-catalyzed mechanism, adding oxygen atoms in the process to yield ureidoacrylate peracid, that immediately reacts with FMN forming ureidoacrylate and FMN-N(5)-oxide. The FMN-N(5)-oxide reacts spontaneously with NADH to produce FMN. Requires the flavin reductase RutF to regenerate FMN in vivo. The chain is Pyrimidine monooxygenase RutA from Variovorax paradoxus (strain S110).